Reading from the N-terminus, the 113-residue chain is Cell division topological specificity factor (113 aa).

It belongs to the MinE family.

Its function is as follows. Prevents the cell division inhibition by proteins MinC and MinD at internal division sites while permitting inhibition at polar sites. This ensures cell division at the proper site by restricting the formation of a division septum at the midpoint of the long axis of the cell. This is Cell division topological specificity factor from Methylobacterium radiotolerans (strain ATCC 27329 / DSM 1819 / JCM 2831 / NBRC 15690 / NCIMB 10815 / 0-1).